The primary structure comprises 1188 residues: Integrin alpha-11 (1188 aa).

The N-terminal stretch at 1-22 (MDFPRGLLVAWTLSLWPGFTDT) is a signal peptide. Residues 23–1141 (FNMDTRNPRV…ISKQEDWQVP (1119 aa)) are Extracellular-facing. 2 FG-GAP repeats span residues 24–85 (NMDT…NCTK) and 91–151 (VTLS…FSKT). A disulfide bridge links Cys76 with Cys83. Residues Asn82 and Asn95 are each glycosylated (N-linked (GlcNAc...) asparagine). 2 cysteine pairs are disulfide-bonded: Cys121–Cys139 and Cys129–Cys159. The region spanning 164-345 (DIVIVLDGSN…AALKDIVDAL (182 aa)) is the VWFA domain. N-linked (GlcNAc...) asparagine glycans are attached at residues Asn291, Asn331, Asn358, Asn449, and Asn462. FG-GAP repeat units lie at residues 355 to 406 (TNKN…VIPH), 411 to 461 (LKEF…SMHN), 462 to 527 (NRSL…RFVY), 528 to 586 (NGTL…NILK), and 590 to 650 (QRIT…FEPS). Positions 488, 490, 492, and 496 each coordinate Ca(2+). Asn528 carries N-linked (GlcNAc...) asparagine glycosylation. Ca(2+)-binding residues include Asp551, Asn553, Asp555, Asp559, Asp613, Asn615, Asp617, and Asp621. The N-linked (GlcNAc...) asparagine glycan is linked to Asn642. Cystine bridges form between Cys659/Cys668, Cys674/Cys729, and Cys781/Cys787. The N-linked (GlcNAc...) asparagine glycan is linked to Asn694. A glycan (N-linked (GlcNAc...) asparagine) is linked at Asn857. Cysteines 881 and 893 form a disulfide. N-linked (GlcNAc...) asparagine glycosylation is found at Asn894, Asn973, Asn1031, Asn1039, and Asn1059. Residues 1142-1164 (IWIIVGSTLGGLLLLALLVLALW) form a helical membrane-spanning segment. Residues 1165-1188 (KLGFFKSAKRKREPGLGPIPKELK) are Cytoplasmic-facing.

Belongs to the integrin alpha chain family. Heterodimer of an alpha and a beta subunit. Alpha-11 associates with beta-1. Interacts with RAB21.

It is found in the membrane. Functionally, integrin alpha-11/beta-1 is a receptor for collagen. The polypeptide is Integrin alpha-11 (Itga11) (Mus musculus (Mouse)).